The following is a 193-amino-acid chain: Cryptic protein (193 aa).

The signal sequence occupies residues 1–25 (MFWRKHVRILFTVTLIWQAIHLGKG). N-linked (GlcNAc...) asparagine glycans are attached at residues asparagine 38 and asparagine 60. 2 cysteine pairs are disulfide-bonded: cysteine 91/cysteine 103 and cysteine 105/cysteine 114. Residues 91-115 (CQNGGTCILGAFCACPKHFSGRHCE) enclose the EGF-like domain.

The protein belongs to the EGF-CFC (Cripto-1/FRL1/Cryptic) family.

The protein resides in the cell membrane. The protein localises to the secreted. Functionally, may play a role in mesoderm and/or neural patterning during gastrulation. This is Cryptic protein (CFC1) from Gallus gallus (Chicken).